A 288-amino-acid chain; its full sequence is Fatty acid-binding protein TM_1468 (288 aa).

The DegV domain maps to 3-283 (VKILVDSTAD…PGTVGFGIEV (281 aa)). Residues Thr63 and Ser96 each contribute to the hexadecanoate site.

As to quaternary structure, monomer.

Functionally, binds long-chain fatty acids, such as palmitate, and may play a role in lipid transport or fatty acid metabolism. This chain is Fatty acid-binding protein TM_1468, found in Thermotoga maritima (strain ATCC 43589 / DSM 3109 / JCM 10099 / NBRC 100826 / MSB8).